Consider the following 219-residue polypeptide: Cytidylate kinase (219 aa).

ATP is bound at residue 21-29 (GPAASGKGT).

Belongs to the cytidylate kinase family. Type 1 subfamily.

Its subcellular location is the cytoplasm. It catalyses the reaction CMP + ATP = CDP + ADP. It carries out the reaction dCMP + ATP = dCDP + ADP. The polypeptide is Cytidylate kinase (Rickettsia conorii (strain ATCC VR-613 / Malish 7)).